Consider the following 508-residue polypeptide: UDP-N-acetylmuramoylalanine--D-glutamate ligase (508 aa).

138 to 144 (GTNGKTT) is a binding site for ATP. The tract at residues 294–314 (FDEPAPRRKKDAPPPTRAGGR) is disordered.

It belongs to the MurCDEF family.

The protein localises to the cytoplasm. The catalysed reaction is UDP-N-acetyl-alpha-D-muramoyl-L-alanine + D-glutamate + ATP = UDP-N-acetyl-alpha-D-muramoyl-L-alanyl-D-glutamate + ADP + phosphate + H(+). The protein operates within cell wall biogenesis; peptidoglycan biosynthesis. In terms of biological role, cell wall formation. Catalyzes the addition of glutamate to the nucleotide precursor UDP-N-acetylmuramoyl-L-alanine (UMA). In Bordetella parapertussis (strain 12822 / ATCC BAA-587 / NCTC 13253), this protein is UDP-N-acetylmuramoylalanine--D-glutamate ligase.